The primary structure comprises 127 residues: Glycine cleavage system H protein 1 (127 aa).

The region spanning 20-101 (SVTVGITAYA…MGEGWFFRFI (82 aa)) is the Lipoyl-binding domain. Residue Lys60 is modified to N6-lipoyllysine.

The protein belongs to the GcvH family. As to quaternary structure, the glycine cleavage system is composed of four proteins: P, T, L and H. (R)-lipoate serves as cofactor.

The glycine cleavage system catalyzes the degradation of glycine. The H protein shuttles the methylamine group of glycine from the P protein to the T protein. In Pseudomonas putida (strain ATCC 47054 / DSM 6125 / CFBP 8728 / NCIMB 11950 / KT2440), this protein is Glycine cleavage system H protein 1.